The chain runs to 392 residues: Phospho-N-acetylmuramoyl-pentapeptide-transferase (392 aa).

Helical transmembrane passes span 24-44 (YLTFRAVMAAMTALLIGLLAG), 76-96 (TMGGVLILGAIAISTLLWFDL), 100-120 (FVWVVLAVTLGFGAIGWVDDW), 137-157 (YFWQSVIGIVAALYLVFCISE), 193-213 (VSYPLGVLGFVILTYLVIVGS), 225-245 (GLAIMPVVMVGASLGVFAYVT), 262-282 (AGELLIFCSAMAGAGLAFLWF), 289-309 (VFMGDVGALALGGALGTIAII), 314-334 (IVLAIMGGIFVVEALSVMLQV), and 369-389 (QVVVRFWIITMLLCLIGLTTL).

The protein belongs to the glycosyltransferase 4 family. MraY subfamily. It depends on Mg(2+) as a cofactor.

It is found in the cell inner membrane. It catalyses the reaction UDP-N-acetyl-alpha-D-muramoyl-L-alanyl-gamma-D-glutamyl-meso-2,6-diaminopimeloyl-D-alanyl-D-alanine + di-trans,octa-cis-undecaprenyl phosphate = di-trans,octa-cis-undecaprenyl diphospho-N-acetyl-alpha-D-muramoyl-L-alanyl-D-glutamyl-meso-2,6-diaminopimeloyl-D-alanyl-D-alanine + UMP. The protein operates within cell wall biogenesis; peptidoglycan biosynthesis. Its function is as follows. Catalyzes the initial step of the lipid cycle reactions in the biosynthesis of the cell wall peptidoglycan: transfers peptidoglycan precursor phospho-MurNAc-pentapeptide from UDP-MurNAc-pentapeptide onto the lipid carrier undecaprenyl phosphate, yielding undecaprenyl-pyrophosphoryl-MurNAc-pentapeptide, known as lipid I. The polypeptide is Phospho-N-acetylmuramoyl-pentapeptide-transferase (Paracidovorax citrulli (strain AAC00-1) (Acidovorax citrulli)).